The sequence spans 404 residues: Probable tRNA sulfurtransferase (404 aa).

Residues 60–165 (HEVAESLKEI…DEAAYISYEN (106 aa)) enclose the THUMP domain. Residues 183-184 (ML), 208-209 (HF), Arg265, Gly287, and Gln296 contribute to the ATP site.

The protein belongs to the ThiI family.

It is found in the cytoplasm. The enzyme catalyses [ThiI sulfur-carrier protein]-S-sulfanyl-L-cysteine + a uridine in tRNA + 2 reduced [2Fe-2S]-[ferredoxin] + ATP + H(+) = [ThiI sulfur-carrier protein]-L-cysteine + a 4-thiouridine in tRNA + 2 oxidized [2Fe-2S]-[ferredoxin] + AMP + diphosphate. It catalyses the reaction [ThiS sulfur-carrier protein]-C-terminal Gly-Gly-AMP + S-sulfanyl-L-cysteinyl-[cysteine desulfurase] + AH2 = [ThiS sulfur-carrier protein]-C-terminal-Gly-aminoethanethioate + L-cysteinyl-[cysteine desulfurase] + A + AMP + 2 H(+). Its pathway is cofactor biosynthesis; thiamine diphosphate biosynthesis. Catalyzes the ATP-dependent transfer of a sulfur to tRNA to produce 4-thiouridine in position 8 of tRNAs, which functions as a near-UV photosensor. Also catalyzes the transfer of sulfur to the sulfur carrier protein ThiS, forming ThiS-thiocarboxylate. This is a step in the synthesis of thiazole, in the thiamine biosynthesis pathway. The sulfur is donated as persulfide by IscS. In Streptococcus agalactiae serotype III (strain NEM316), this protein is Probable tRNA sulfurtransferase.